Consider the following 467-residue polypeptide: Transcriptional regulator of yeast form adherence 6 (467 aa).

Positions 43–52 (NTSDAGSIPT) are enriched in polar residues. 5 disordered regions span residues 43 to 83 (NTSD…NIDS), 128 to 149 (GSSG…NSNN), 245 to 275 (ESPE…SNSS), 312 to 365 (NNQL…SGSK), and 390 to 439 (STLN…DNDR). The region spanning 92–173 (ETKQLHSIIE…KSSVEYILYL (82 aa)) is the bHLH domain. Composition is skewed to low complexity over residues 257 to 275 (VSET…SNSS) and 312 to 322 (NNQLNNRKNSN). A compositionally biased stretch (polar residues) spans 323 to 338 (PISPQTVCIKSQNPSP). Residues 345 to 365 (SSLSTSIVNSPSSSSSLSGSK) show a composition bias toward low complexity. Positions 417-432 (GSANTETVNSGSASSD) are enriched in polar residues.

It is found in the nucleus. Transcription factor required for yeast cell adherence to silicone substrate. The chain is Transcriptional regulator of yeast form adherence 6 (TRY6) from Candida albicans (strain SC5314 / ATCC MYA-2876) (Yeast).